A 69-amino-acid chain; its full sequence is Pantinin-1 (69 aa).

Positions 1–23 (MKTQFVILMITVILMQMLVQTEG) are cleaved as a signal peptide. Valine 37 carries the valine amide modification. A propeptide spanning residues 41–69 (GLNDRDQLDDLFDSDLSDADIKLLKEMFK) is cleaved from the precursor.

It belongs to the non-disulfide-bridged peptide (NDBP) superfamily. Short antimicrobial peptide (group 4) family. As to expression, expressed by the venom gland.

It is found in the secreted. The protein resides in the target cell membrane. Functionally, amphipathic peptide that possesses relatively strong activities against Gram-positive bacteria and a fungus, but has very weak antimicrobial activities against Gram-negative bacteria. Also exhibits very low hemolytic activities against human erythrocytes (64 uM induce 21% of hemolysis). Minimal inhibitory concentration (MIC) are the following: 8 uM against S.aureus, 32 uM against B.magaterium, 32 uM against M.luteus, 28 uM against vancomycin-resistant Enterococci, 14 uM against methicillin-resistant S.aureus, 62 uM against E.coli, &gt;87 uM against P.putida, &gt;87 uM against K.oxytoca, 76 uM against E.cloacae, 72 uM against S.enterica and 16 uM against the fungus C.tropicalis. The protein is Pantinin-1 of Pandinus imperator (Emperor scorpion).